The chain runs to 381 residues: Heme A synthase (381 aa).

The tract at residues 1-28 (MSNRTIFEEVSSDSKQQSSPTPGGIDRK) is disordered. 8 consecutive transmembrane segments (helical) span residues 36 to 56 (IRVW…VGGL), 125 to 145 (VIGL…SIPT), 151 to 171 (LLLP…MVAS), 187 to 207 (LATH…YMFL), 230 to 250 (STGL…VAGI), 287 to 307 (LVQF…VVVW), 320 to 340 (FAFN…IVTV), and 344 to 364 (APVE…VLIL). Histidine 292 lines the heme pocket. Histidine 352 is a binding site for heme.

It belongs to the COX15/CtaA family. Type 2 subfamily. Interacts with CtaB. Heme b is required as a cofactor.

It localises to the cell membrane. It catalyses the reaction Fe(II)-heme o + 2 A + H2O = Fe(II)-heme a + 2 AH2. It participates in porphyrin-containing compound metabolism; heme A biosynthesis; heme A from heme O: step 1/1. In terms of biological role, catalyzes the conversion of heme O to heme A by two successive hydroxylations of the methyl group at C8. The first hydroxylation forms heme I, the second hydroxylation results in an unstable dihydroxymethyl group, which spontaneously dehydrates, resulting in the formyl group of heme A. In Ruegeria sp. (strain TM1040) (Silicibacter sp.), this protein is Heme A synthase.